The chain runs to 259 residues: MASQGPLVIAMRLRNQLQSVYKMDPLRNEEVVKVKIKELNEHIVCYLCAGYFIDATTITECLHTFCKSCIVKYLQTSKYCPLCNIKIHETQPLLNLKLDRVMQDIVYKLVPGLQENEDSRIRDFYHSRGLERVLQPSAVEDSVGDVSQLSLSLAVSQKTSHYYRNDEHVCLCLEKVSSGKDKKKFILQQKYVRCSVRSEIRHLRRVLSHRLSAPLAQVQLLIDNKVLPDHMTMKQLWLMHWYGKPAPLVLLYSVKEKRR.

The RING-type zinc-finger motif lies at 45–84 (CYLCAGYFIDATTITECLHTFCKSCIVKYLQTSKYCPLCN).

In terms of assembly, component of a PRC1-like complex.

Its subcellular location is the nucleus. Its function is as follows. Component of a Polycomb group (PcG) multiprotein PRC1-like complex, a complex class required to maintain the transcriptionally repressive state of many genes, including Hox genes, throughout development. PcG PRC1 complex acts via chromatin remodeling and modification of histones; it mediates monoubiquitination of histone H2A 'Lys-119', rendering chromatin heritably changed in its expressibility. The protein is Polycomb group RING finger protein 1 (pcgf1) of Xenopus laevis (African clawed frog).